The following is a 313-amino-acid chain: MMENYKHTTVLLDEAVNGLNIRPDGTYIDGTFGRGGHSRLILSQLGEEGRLLAIDRDPQAIAVAKTIDDPRFSIIHGPFSALGEYVAERDLIGKIDGILLDLGVSSPQLDDAERGFSFMRDGPLDMRMDPTRGQSAAEWLQTAEEADIAWVLKTYGEERFAKRIARAIVERNREQPMTRTKELAEVVAAATPVKDKFKHPATRTFQAVRIWVNSELEEIEQALKSSLNVLAPGGRLSIISFHSLEDRIVKRFMRENSRGPQVPAGLPMTEEQLKKLGGRQLRALGKLMPGEEEVAENPRARSSVLRIAERTNA.

S-adenosyl-L-methionine-binding positions include 35–37 (GGH), Asp55, Phe79, Asp101, and Gln108.

This sequence belongs to the methyltransferase superfamily. RsmH family.

The protein resides in the cytoplasm. It catalyses the reaction cytidine(1402) in 16S rRNA + S-adenosyl-L-methionine = N(4)-methylcytidine(1402) in 16S rRNA + S-adenosyl-L-homocysteine + H(+). Functionally, specifically methylates the N4 position of cytidine in position 1402 (C1402) of 16S rRNA. The chain is Ribosomal RNA small subunit methyltransferase H from Escherichia coli O81 (strain ED1a).